Here is a 204-residue protein sequence, read N- to C-terminus: Leucyl/phenylalanyl-tRNA--protein transferase (204 aa).

It belongs to the L/F-transferase family.

The protein resides in the cytoplasm. It catalyses the reaction N-terminal L-lysyl-[protein] + L-leucyl-tRNA(Leu) = N-terminal L-leucyl-L-lysyl-[protein] + tRNA(Leu) + H(+). The catalysed reaction is N-terminal L-arginyl-[protein] + L-leucyl-tRNA(Leu) = N-terminal L-leucyl-L-arginyl-[protein] + tRNA(Leu) + H(+). The enzyme catalyses L-phenylalanyl-tRNA(Phe) + an N-terminal L-alpha-aminoacyl-[protein] = an N-terminal L-phenylalanyl-L-alpha-aminoacyl-[protein] + tRNA(Phe). Functionally, functions in the N-end rule pathway of protein degradation where it conjugates Leu, Phe and, less efficiently, Met from aminoacyl-tRNAs to the N-termini of proteins containing an N-terminal arginine or lysine. In Rhizobium leguminosarum bv. trifolii (strain WSM2304), this protein is Leucyl/phenylalanyl-tRNA--protein transferase.